Here is a 312-residue protein sequence, read N- to C-terminus: Glycine--tRNA ligase alpha subunit (312 aa).

It belongs to the class-II aminoacyl-tRNA synthetase family. As to quaternary structure, tetramer of two alpha and two beta subunits.

The protein resides in the cytoplasm. The catalysed reaction is tRNA(Gly) + glycine + ATP = glycyl-tRNA(Gly) + AMP + diphosphate. This is Glycine--tRNA ligase alpha subunit from Delftia acidovorans (strain DSM 14801 / SPH-1).